The chain runs to 80 residues: Cytochrome c oxidase subunit 7B, mitochondrial (80 aa).

The N-terminal 24 residues, 1–24, are a transit peptide targeting the mitochondrion; sequence MFPLAKNALSRLRVQSIQQAVARQ. Over 25–32 the chain is Mitochondrial matrix; that stretch reads IHQKRAPD. The helical transmembrane segment at 33-59 threads the bilayer; it reads FHDKYGNAVLASGATFCVAVWVYMATQ. Topologically, residues 60–80 are mitochondrial intermembrane; it reads IGIEWNPSPVGRVTPKEWREQ.

It belongs to the cytochrome c oxidase VIIb family. Component of the cytochrome c oxidase (complex IV, CIV), a multisubunit enzyme composed of 14 subunits. The complex is composed of a catalytic core of 3 subunits MT-CO1, MT-CO2 and MT-CO3, encoded in the mitochondrial DNA, and 11 supernumerary subunits COX4I1 (or COX4I2), COX5A, COX5B, COX6A2 (or COX6A1), COX6B1 (or COX6B2), COX6C, COX7A1 (or COX7A2), COX7B, COX7C, COX8B and NDUFA4, which are encoded in the nuclear genome. The complex exists as a monomer or a dimer and forms supercomplexes (SCs) in the inner mitochondrial membrane with NADH-ubiquinone oxidoreductase (complex I, CI) and ubiquinol-cytochrome c oxidoreductase (cytochrome b-c1 complex, complex III, CIII), resulting in different assemblies (supercomplex SCI(1)III(2)IV(1) and megacomplex MCI(2)III(2)IV(2)).

It is found in the mitochondrion inner membrane. Its pathway is energy metabolism; oxidative phosphorylation. In terms of biological role, component of the cytochrome c oxidase, the last enzyme in the mitochondrial electron transport chain which drives oxidative phosphorylation. The respiratory chain contains 3 multisubunit complexes succinate dehydrogenase (complex II, CII), ubiquinol-cytochrome c oxidoreductase (cytochrome b-c1 complex, complex III, CIII) and cytochrome c oxidase (complex IV, CIV), that cooperate to transfer electrons derived from NADH and succinate to molecular oxygen, creating an electrochemical gradient over the inner membrane that drives transmembrane transport and the ATP synthase. Cytochrome c oxidase is the component of the respiratory chain that catalyzes the reduction of oxygen to water. Electrons originating from reduced cytochrome c in the intermembrane space (IMS) are transferred via the dinuclear copper A center (CU(A)) of subunit 2 and heme A of subunit 1 to the active site in subunit 1, a binuclear center (BNC) formed by heme A3 and copper B (CU(B)). The BNC reduces molecular oxygen to 2 water molecules using 4 electrons from cytochrome c in the IMS and 4 protons from the mitochondrial matrix. Plays a role in proper central nervous system (CNS) development in vertebrates. The chain is Cytochrome c oxidase subunit 7B, mitochondrial (COX7B) from Bos taurus (Bovine).